Reading from the N-terminus, the 214-residue chain is 3,4-dihydroxy-2-butanone 4-phosphate synthase (214 aa).

Residues 37–38 (RE), Asp42, 150–154 (RRGHT), and Glu174 contribute to the D-ribulose 5-phosphate site. Residue Glu38 coordinates Mg(2+). Mg(2+) is bound at residue His153.

This sequence belongs to the DHBP synthase family. Homodimer. The cofactor is Mg(2+). It depends on Mn(2+) as a cofactor.

The enzyme catalyses D-ribulose 5-phosphate = (2S)-2-hydroxy-3-oxobutyl phosphate + formate + H(+). It functions in the pathway cofactor biosynthesis; riboflavin biosynthesis; 2-hydroxy-3-oxobutyl phosphate from D-ribulose 5-phosphate: step 1/1. Catalyzes the conversion of D-ribulose 5-phosphate to formate and 3,4-dihydroxy-2-butanone 4-phosphate. This is 3,4-dihydroxy-2-butanone 4-phosphate synthase from Nitratidesulfovibrio vulgaris (strain DP4) (Desulfovibrio vulgaris).